A 37-amino-acid chain; its full sequence is Large ribosomal subunit protein bL36 (37 aa).

The protein belongs to the bacterial ribosomal protein bL36 family.

The sequence is that of Large ribosomal subunit protein bL36 from Mycoplasmopsis pulmonis (strain UAB CTIP) (Mycoplasma pulmonis).